A 500-amino-acid polypeptide reads, in one-letter code: L-arabinose isomerase (500 aa).

4 residues coordinate Mn(2+): E306, E333, H350, and H450.

This sequence belongs to the arabinose isomerase family. Homohexamer. Requires Mn(2+) as cofactor.

The enzyme catalyses beta-L-arabinopyranose = L-ribulose. It participates in carbohydrate degradation; L-arabinose degradation via L-ribulose; D-xylulose 5-phosphate from L-arabinose (bacterial route): step 1/3. Its function is as follows. Catalyzes the conversion of L-arabinose to L-ribulose. The protein is L-arabinose isomerase of Escherichia coli O7:K1 (strain IAI39 / ExPEC).